Consider the following 216-residue polypeptide: ATP-dependent Clp protease proteolytic subunit (216 aa).

Ser-101 acts as the Nucleophile in catalysis. His-126 is an active-site residue.

Belongs to the peptidase S14 family. Component of the chloroplastic Clp protease core complex.

It is found in the plastid. The protein resides in the chloroplast stroma. The enzyme catalyses Hydrolysis of proteins to small peptides in the presence of ATP and magnesium. alpha-casein is the usual test substrate. In the absence of ATP, only oligopeptides shorter than five residues are hydrolyzed (such as succinyl-Leu-Tyr-|-NHMec, and Leu-Tyr-Leu-|-Tyr-Trp, in which cleavage of the -Tyr-|-Leu- and -Tyr-|-Trp bonds also occurs).. Its function is as follows. Cleaves peptides in various proteins in a process that requires ATP hydrolysis. Has a chymotrypsin-like activity. Plays a major role in the degradation of misfolded proteins. The sequence is that of ATP-dependent Clp protease proteolytic subunit from Triticum aestivum (Wheat).